Here is a 217-residue protein sequence, read N- to C-terminus: ATP-dependent Clp protease proteolytic subunit (217 aa).

Catalysis depends on S121, which acts as the Nucleophile. H146 is an active-site residue.

It belongs to the peptidase S14 family. Fourteen ClpP subunits assemble into 2 heptameric rings which stack back to back to give a disk-like structure with a central cavity, resembling the structure of eukaryotic proteasomes.

Its subcellular location is the cytoplasm. It catalyses the reaction Hydrolysis of proteins to small peptides in the presence of ATP and magnesium. alpha-casein is the usual test substrate. In the absence of ATP, only oligopeptides shorter than five residues are hydrolyzed (such as succinyl-Leu-Tyr-|-NHMec, and Leu-Tyr-Leu-|-Tyr-Trp, in which cleavage of the -Tyr-|-Leu- and -Tyr-|-Trp bonds also occurs).. Functionally, cleaves peptides in various proteins in a process that requires ATP hydrolysis. Has a chymotrypsin-like activity. Plays a major role in the degradation of misfolded proteins. This Burkholderia vietnamiensis (strain G4 / LMG 22486) (Burkholderia cepacia (strain R1808)) protein is ATP-dependent Clp protease proteolytic subunit.